The chain runs to 97 residues: Large ribosomal subunit protein uL23 (97 aa).

This sequence belongs to the universal ribosomal protein uL23 family. In terms of assembly, part of the 50S ribosomal subunit. Contacts protein L29, and trigger factor when it is bound to the ribosome.

Its function is as follows. One of the early assembly proteins it binds 23S rRNA. One of the proteins that surrounds the polypeptide exit tunnel on the outside of the ribosome. Forms the main docking site for trigger factor binding to the ribosome. This is Large ribosomal subunit protein uL23 from Limosilactobacillus fermentum (strain NBRC 3956 / LMG 18251) (Lactobacillus fermentum).